We begin with the raw amino-acid sequence, 512 residues long: Cytochrome P450 1A1 (512 aa).

Positions 29–40 are mitochondrial targeting signal; it reads SRPRVPKGLKNP. The O-linked (GlcNAc) serine glycan is linked to Ser67. Phe224 contributes to the substrate binding site. Residue Cys457 coordinates heme.

The protein belongs to the cytochrome P450 family. As to quaternary structure, interacts with cytosolic chaperones HSP70 and HSP90; this interaction is required for initial targeting to mitochondria. Interacts (via mitochondrial targeting signal) with TOMM40 (via N-terminus); this interaction is required for translocation across the mitochondrial outer membrane. Heme is required as a cofactor.

Its subcellular location is the endoplasmic reticulum membrane. The protein localises to the mitochondrion inner membrane. It is found in the microsome membrane. The protein resides in the cytoplasm. The enzyme catalyses an organic molecule + reduced [NADPH--hemoprotein reductase] + O2 = an alcohol + oxidized [NADPH--hemoprotein reductase] + H2O + H(+). It carries out the reaction estrone + reduced [NADPH--hemoprotein reductase] + O2 = 2-hydroxyestrone + oxidized [NADPH--hemoprotein reductase] + H2O + H(+). The catalysed reaction is estrone + reduced [NADPH--hemoprotein reductase] + O2 = 4-hydroxyestrone + oxidized [NADPH--hemoprotein reductase] + H2O + H(+). It catalyses the reaction estrone + reduced [NADPH--hemoprotein reductase] + O2 = 6alpha-hydroxyestrone + oxidized [NADPH--hemoprotein reductase] + H2O + H(+). The enzyme catalyses estrone + reduced [NADPH--hemoprotein reductase] + O2 = 15alpha-hydroxyestrone + oxidized [NADPH--hemoprotein reductase] + H2O + H(+). It carries out the reaction estrone + reduced [NADPH--hemoprotein reductase] + O2 = 16alpha-hydroxyestrone + oxidized [NADPH--hemoprotein reductase] + H2O + H(+). The catalysed reaction is 17beta-estradiol + reduced [NADPH--hemoprotein reductase] + O2 = 2-hydroxy-17beta-estradiol + oxidized [NADPH--hemoprotein reductase] + H2O + H(+). It catalyses the reaction 17beta-estradiol + reduced [NADPH--hemoprotein reductase] + O2 = 4-hydroxy-17beta-estradiol + oxidized [NADPH--hemoprotein reductase] + H2O + H(+). The enzyme catalyses 17beta-estradiol + reduced [NADPH--hemoprotein reductase] + O2 = 6alpha-hydroxy-17beta-estradiol + oxidized [NADPH--hemoprotein reductase] + H2O + H(+). It carries out the reaction 17beta-estradiol + reduced [NADPH--hemoprotein reductase] + O2 = 7alpha-hydroxy-17beta-estradiol + oxidized [NADPH--hemoprotein reductase] + H2O + H(+). The catalysed reaction is 17beta-estradiol + reduced [NADPH--hemoprotein reductase] + O2 = 15alpha-hydroxy-17beta-estradiol + oxidized [NADPH--hemoprotein reductase] + H2O + H(+). It catalyses the reaction (5Z,8Z,11Z)-eicosatrienoate + reduced [NADPH--hemoprotein reductase] + O2 = 19-hydroxy-(5Z,8Z,11Z)-eicosatrienoate + oxidized [NADPH--hemoprotein reductase] + H2O + H(+). The enzyme catalyses (5Z,8Z,11Z,14Z)-eicosatetraenoate + reduced [NADPH--hemoprotein reductase] + O2 = 16-hydroxy-(5Z,8Z,11Z,14Z)-eicosatetraenoate + oxidized [NADPH--hemoprotein reductase] + H2O + H(+). It carries out the reaction (5Z,8Z,11Z,14Z)-eicosatetraenoate + reduced [NADPH--hemoprotein reductase] + O2 = 17-hydroxy-(5Z,8Z,11Z,14Z)-eicosatetraenoate + oxidized [NADPH--hemoprotein reductase] + H2O + H(+). The catalysed reaction is (5Z,8Z,11Z,14Z)-eicosatetraenoate + reduced [NADPH--hemoprotein reductase] + O2 = 18-hydroxy-(5Z,8Z,11Z,14Z)-eicosatetraenoate + oxidized [NADPH--hemoprotein reductase] + H2O + H(+). It catalyses the reaction (5Z,8Z,11Z,14Z)-eicosatetraenoate + reduced [NADPH--hemoprotein reductase] + O2 = 19-hydroxy-(5Z,8Z,11Z,14Z)-eicosatetraenoate + oxidized [NADPH--hemoprotein reductase] + H2O + H(+). The enzyme catalyses (5Z,8Z,11Z,14Z,17Z)-eicosapentaenoate + reduced [NADPH--hemoprotein reductase] + O2 = 19-hydroxy-(5Z,8Z,11Z,14Z,17Z)-eicosapentaenoate + oxidized [NADPH--hemoprotein reductase] + H2O + H(+). It carries out the reaction (5Z,8Z,11Z,14Z)-eicosatetraenoate + reduced [NADPH--hemoprotein reductase] + O2 = (8R,9S)-epoxy-(5Z,11Z,14Z)-eicosatrienoate + oxidized [NADPH--hemoprotein reductase] + H2O + H(+). The catalysed reaction is (5Z,8Z,11Z,14Z)-eicosatetraenoate + reduced [NADPH--hemoprotein reductase] + O2 = (11R,12S)-epoxy-(5Z,8Z,14Z)-eicosatrienoate + oxidized [NADPH--hemoprotein reductase] + H2O + H(+). It catalyses the reaction (5Z,8Z,11Z,14Z)-eicosatetraenoate + reduced [NADPH--hemoprotein reductase] + O2 = (14S,15R)-epoxy-(5Z,8Z,11Z)-eicosatrienoate + oxidized [NADPH--hemoprotein reductase] + H2O + H(+). The enzyme catalyses (5Z,8Z,11Z,14Z)-eicosatetraenoate + reduced [NADPH--hemoprotein reductase] + O2 = (14R,15S)-epoxy-(5Z,8Z,11Z)-eicosatrienoate + oxidized [NADPH--hemoprotein reductase] + H2O + H(+). It carries out the reaction (5Z,8Z,11Z,14Z,17Z)-eicosapentaenoate + reduced [NADPH--hemoprotein reductase] + O2 = (17R,18S)-epoxy-(5Z,8Z,11Z,14Z)-eicosatetraenoate + oxidized [NADPH--hemoprotein reductase] + H2O + H(+). The catalysed reaction is (4Z,7Z,10Z,13Z,16Z,19Z)-docosahexaenoate + reduced [NADPH--hemoprotein reductase] + O2 = (19S,20R)-epoxy-(4Z,7Z,10Z,13Z,16Z)-docosapentaenoate + oxidized [NADPH--hemoprotein reductase] + H2O + H(+). It catalyses the reaction (4Z,7Z,10Z,13Z,16Z,19Z)-docosahexaenoate + reduced [NADPH--hemoprotein reductase] + O2 = (19R,20S)-epoxy-(4Z,7Z,10Z,13Z,16Z)-docosapentaenoate + oxidized [NADPH--hemoprotein reductase] + H2O + H(+). The enzyme catalyses all-trans-retinol + reduced [NADPH--hemoprotein reductase] + O2 = all-trans-retinal + oxidized [NADPH--hemoprotein reductase] + 2 H2O + H(+). It carries out the reaction all-trans-retinal + reduced [NADPH--hemoprotein reductase] + O2 = all-trans-retinoate + oxidized [NADPH--hemoprotein reductase] + H2O + 2 H(+). The catalysed reaction is (13S)-hydroperoxy-(9Z,11E)-octadecadienoate = 13-oxo-(9Z,11E)-octadecadienoate + H2O. It catalyses the reaction (12S)-hydroperoxy-(5Z,8Z,10E,14Z)-eicosatetraenoate = 12-oxo-(5Z,8Z,10E,14Z)-eicosatetraenoate + H2O. The enzyme catalyses (15S)-hydroperoxy-(5Z,8Z,11Z,13E)-eicosatetraenoate = 15-oxo-(5Z,8Z,11Z,13E)-eicosatetraenoate + H2O. It carries out the reaction (5S)-hydroperoxy-(6E,8Z,11Z,14Z)-eicosatetraenoate = 5-oxo-(6E,8Z,11Z,14Z)-eicosatetraenoate + H2O. It participates in steroid hormone biosynthesis. It functions in the pathway lipid metabolism; fatty acid metabolism. Its pathway is cofactor metabolism; retinol metabolism. A cytochrome P450 monooxygenase involved in the metabolism of various endogenous substrates, including fatty acids, steroid hormones and vitamins. Mechanistically, uses molecular oxygen inserting one oxygen atom into a substrate, and reducing the second into a water molecule, with two electrons provided by NADPH via cytochrome P450 reductase (CPR; NADPH-ferrihemoprotein reductase). Catalyzes the hydroxylation of carbon-hydrogen bonds. Exhibits high catalytic activity for the formation of hydroxyestrogens from estrone (E1) and 17beta-estradiol (E2), namely 2-hydroxy E1 and E2, as well as D-ring hydroxylated E1 and E2 at the C15alpha and C16alpha positions. Displays different regioselectivities for polyunsaturated fatty acids (PUFA) hydroxylation. Catalyzes the epoxidation of double bonds of certain PUFA. Converts arachidonic acid toward epoxyeicosatrienoic acid (EET) regioisomers, 8,9-, 11,12-, and 14,15-EET, that function as lipid mediators in the vascular system. Displays an absolute stereoselectivity in the epoxidation of eicosapentaenoic acid (EPA) producing the 17(R),18(S) enantiomer. May play an important role in all-trans retinoic acid biosynthesis in extrahepatic tissues. Catalyzes two successive oxidative transformation of all-trans retinol to all-trans retinal and then to the active form all-trans retinoic acid. May also participate in eicosanoids metabolism by converting hydroperoxide species into oxo metabolites (lipoxygenase-like reaction, NADPH-independent). The polypeptide is Cytochrome P450 1A1 (CYP1A1) (Macaca fascicularis (Crab-eating macaque)).